A 388-amino-acid chain; its full sequence is MNLHEYQAKQLFARYGLPAPVGYACTTPREAEEAASKIGAGPWVVKCQVHAGGRGKAGGVKVVNSKEDIRAFAENWLGKRLVTYQTDANGQPVNQILVEAATDIAKELYLGAVVDRSSRRVVFMASTEGGVEIEKVAEETPHLIHKVALDPLTGPMPYQGRELAFKLGLEGKLVQQFTKIFMGLATIFLERDLALIEINPLVITKQGDLICLDGKLGADGNALFRQPDLREMRDQSQEDPREAQAAQWELNYVALDGNIGCMVNGAGLAMGTMDIVKLHGGEPANFLDVGGGATKERVTEAFKIILSDDKVKAVLVNIFGGIVRCDLIADGIIGAVAEVGVNVPVVVRLEGNNAEVGAKKLADSGLNIIAAKGLTDAAQQVVAAVEGK.

Residues 9–244 (KQLFARYGLP…QSQEDPREAQ (236 aa)) enclose the ATP-grasp domain. ATP-binding positions include Lys-46, 53–55 (GRG), Glu-99, Thr-102, and Glu-107. Mg(2+) contacts are provided by Asn-199 and Asp-213. Residues Asn-264 and 321–323 (GIV) each bind substrate.

Belongs to the succinate/malate CoA ligase beta subunit family. As to quaternary structure, heterotetramer of two alpha and two beta subunits. Mg(2+) is required as a cofactor.

The catalysed reaction is succinate + ATP + CoA = succinyl-CoA + ADP + phosphate. The enzyme catalyses GTP + succinate + CoA = succinyl-CoA + GDP + phosphate. Its pathway is carbohydrate metabolism; tricarboxylic acid cycle; succinate from succinyl-CoA (ligase route): step 1/1. Functionally, succinyl-CoA synthetase functions in the citric acid cycle (TCA), coupling the hydrolysis of succinyl-CoA to the synthesis of either ATP or GTP and thus represents the only step of substrate-level phosphorylation in the TCA. The beta subunit provides nucleotide specificity of the enzyme and binds the substrate succinate, while the binding sites for coenzyme A and phosphate are found in the alpha subunit. The sequence is that of Succinate--CoA ligase [ADP-forming] subunit beta from Escherichia coli O8 (strain IAI1).